The sequence spans 282 residues: MKLCYNQATTLENSNLVKDLEYCEKNGYDYIEIRTMDKLPEYLKDHTLDELKHFFQTNHIKPLALNALVFFNNRDEAGYKEIITEFKGMMETAKALNIPYVVAVPLVTEEKILKSEIKRSCVNVLTELSEIAKPYGVKVALEFIGHPQCTVNTFGQAYEIVEAVGRDNIGLVLDCFHFHAMGSNISDLEKADISKIFILHMDDTEDFPVGFLTDEDRVWPGHGAINLDQMLSILKEKGYSGAVSVELFRPEYYQLSAEEAIKTAKDTTVEVVSKHFTLETTK.

A divalent metal cation is bound by residues glutamate 142, aspartate 174, histidine 200, and glutamate 246.

Belongs to the IolI family. It depends on a divalent metal cation as a cofactor.

The enzyme catalyses scyllo-inosose = scyllo-inosine. The protein operates within polyol metabolism; myo-inositol degradation into acetyl-CoA. Functionally, involved in the reversible interconverion of 2-keto-myo-inositol (2KMI, inosose or 2,4,6/3,5-pentahydroxycyclohexanone) to 1-keto-D-chiro-inositol (1KDCI or 2,3,5/4,6-pentahydroxycyclohexanone). The protein is Inosose isomerase (iolI) of Halalkalibacterium halodurans (strain ATCC BAA-125 / DSM 18197 / FERM 7344 / JCM 9153 / C-125) (Bacillus halodurans).